Here is a 93-residue protein sequence, read N- to C-terminus: Putative septation protein SpoVG (93 aa).

Belongs to the SpoVG family.

Functionally, could be involved in septation. The protein is Putative septation protein SpoVG of Fusobacterium nucleatum subsp. nucleatum (strain ATCC 25586 / DSM 15643 / BCRC 10681 / CIP 101130 / JCM 8532 / KCTC 2640 / LMG 13131 / VPI 4355).